The sequence spans 198 residues: Hookworm platelet inhibitor 1 (198 aa).

The first 17 residues, 1-17 (MSSYLLVLVAILGFAYA), serve as a signal peptide directing secretion. Cystine bridges form between C24/C65, C78/C146, C141/C154, C174/C186, and C177/C195.

This sequence belongs to the CRISP family. As to quaternary structure, monomer. Detected in cephalic glands.

It is found in the secreted. Its function is as follows. Hookworms inhibitor of platelet aggregation and adhesion. Native protein inhibits platelet aggregation induced by ADP, epinephrine, and thrombin. In addition, it prevents adhesion of resting platelets to immobilized fibrinogen and collagen. May act by binding to glycoprotein IIb/IIIa (ITGA2B/ITGB3) and integrin alpha-2/beta-1 (ITGA1/ITGB1), respectively. It is noteworthy that the recombinant protein fails to inhibit binding to fibrinogen (through ITGA2B/ITGB3) and collagen (through ITGA1/ITGB1). The protein is Hookworm platelet inhibitor 1 of Ancylostoma caninum (Dog hookworm).